The sequence spans 369 residues: MKKTLAALIVGAFAASAANAAVVYNNEGTNVELGGRLSIIAEQSNSTIKDQKQQHGALRNQSSRFHIKATHNFGDGFYAQGYLETRLVSAQSGTESDNFGHIITKYAYVTLGNKALGEVKLGRAKTIADGITSAEDKEYGVLNNSKYIPIDGNTVGYTFKGIDGLVLGANYLLAQERYKYTTAAAAGAAGAAGAVAGEVYPQKISNGVQVGAKYDANNIIAGIAYGRTNYREDIASPDLGKKQQVNGALSTLGYRFSDLGLLVSLDSGYAKTKNYKDKHEKSYFVSPGFQYELMEDTNVYGNFKYERDSVDQGKKTREQAVLFGVDHKLHKQVLTYIEGAYARTRTTESKKGVKTEKEKSVGVGLRVYF.

Residues 1 to 20 (MKKTLAALIVGAFAASAANA) form the signal peptide.

The protein belongs to the Gram-negative porin family. In terms of assembly, homotrimer.

Its subcellular location is the cell outer membrane. Forms pores that allow passive diffusion of small molecules across the outer membrane. The protein is Outer membrane protein P2 (ompP2) of Haemophilus influenzae.